We begin with the raw amino-acid sequence, 174 residues long: NADH-ubiquinone oxidoreductase chain 6 (174 aa).

Helical transmembrane passes span S25–V45, F48–Y68, F82–I102, and L143–T163.

The protein belongs to the complex I subunit 6 family.

The protein resides in the mitochondrion membrane. The catalysed reaction is a ubiquinone + NADH + 5 H(+)(in) = a ubiquinol + NAD(+) + 4 H(+)(out). Functionally, core subunit of the mitochondrial membrane respiratory chain NADH dehydrogenase (Complex I) that is believed to belong to the minimal assembly required for catalysis. Complex I functions in the transfer of electrons from NADH to the respiratory chain. The immediate electron acceptor for the enzyme is believed to be ubiquinone. The protein is NADH-ubiquinone oxidoreductase chain 6 (ND6) of Anopheles albimanus (New world malaria mosquito).